Reading from the N-terminus, the 180-residue chain is Large ribosomal subunit protein uL6 (180 aa).

It belongs to the universal ribosomal protein uL6 family. Part of the 50S ribosomal subunit.

This protein binds to the 23S rRNA, and is important in its secondary structure. It is located near the subunit interface in the base of the L7/L12 stalk, and near the tRNA binding site of the peptidyltransferase center. The polypeptide is Large ribosomal subunit protein uL6 (Clostridioides difficile (strain 630) (Peptoclostridium difficile)).